A 194-amino-acid chain; its full sequence is Probable GTP-binding protein EngB (194 aa).

Residues 22–194 form the EngB-type G domain; it reads KIPQIAIVGK…LRIFEEVIEK (173 aa). Residues 30–37, 57–61, 75–78, 142–145, and 173–175 each bind GTP; these read GKSNVGKS, GKTRG, DLPG, TKAD, and FSA. Mg(2+)-binding residues include serine 37 and threonine 59.

The protein belongs to the TRAFAC class TrmE-Era-EngA-EngB-Septin-like GTPase superfamily. EngB GTPase family. The cofactor is Mg(2+).

Functionally, necessary for normal cell division and for the maintenance of normal septation. This is Probable GTP-binding protein EngB from Caldanaerobacter subterraneus subsp. tengcongensis (strain DSM 15242 / JCM 11007 / NBRC 100824 / MB4) (Thermoanaerobacter tengcongensis).